The primary structure comprises 364 residues: Aminomethyltransferase (364 aa).

The protein belongs to the GcvT family. In terms of assembly, the glycine cleavage system is composed of four proteins: P, T, L and H.

It carries out the reaction N(6)-[(R)-S(8)-aminomethyldihydrolipoyl]-L-lysyl-[protein] + (6S)-5,6,7,8-tetrahydrofolate = N(6)-[(R)-dihydrolipoyl]-L-lysyl-[protein] + (6R)-5,10-methylene-5,6,7,8-tetrahydrofolate + NH4(+). In terms of biological role, the glycine cleavage system catalyzes the degradation of glycine. The protein is Aminomethyltransferase of Salmonella paratyphi B (strain ATCC BAA-1250 / SPB7).